Here is a 313-residue protein sequence, read N- to C-terminus: Bifunctional pinoresinol-lariciresinol reductase 1 (313 aa).

Residues 11–17 (GGTGYIG), Arg36, and Lys45 contribute to the NADP(+) site. Lys138 functions as the Proton acceptor in the catalytic mechanism. Arg142 is an NADP(+) binding site. His271 provides a ligand contact to substrate.

The protein belongs to the NmrA-type oxidoreductase family. Isoflavone reductase subfamily. As to quaternary structure, dimer.

It catalyses the reaction (+)-lariciresinol + NADP(+) = (+)-pinoresinol + NADPH + H(+). The catalysed reaction is (-)-lariciresinol + NADP(+) = (-)-pinoresinol + NADPH + H(+). The enzyme catalyses (+)-secoisolariciresinol + NADP(+) = (-)-lariciresinol + NADPH + H(+). In terms of biological role, reductase involved in lignan biosynthesis. Catalyzes the enantioselective sequential conversion of (-)-pinoresinol into (-)-lariciresinol and of (-)-lariciresinol into (+)-secoisolariciresinol. Can also convert with a lower efficiency (+)-pinoresinol into (+)-lariciresinol, but not (+)-lariciresinol into (-)-secoisolariciresinol. Abstracts the 4R-hydride from the NADPH cofactor during catalysis. This Thuja plicata (Western red-cedar) protein is Bifunctional pinoresinol-lariciresinol reductase 1 (PLR_Tp1).